The primary structure comprises 147 residues: Hemoglobin subunit beta (147 aa).

A Globin domain is found at 3 to 147; that stretch reads EWTDKERTII…VVSALGKQYH (145 aa). Heme b-binding residues include His64 and His93.

It belongs to the globin family. Heterotetramer of two alpha chains and two beta chains. Red blood cells.

In terms of biological role, involved in oxygen transport from gills to the various peripheral tissues. This Trematomus newnesi (Dusky notothen) protein is Hemoglobin subunit beta.